The following is a 293-amino-acid chain: MALVSADSRIAELLAELQRLLGHTQEERSRSEHNLINIQKTHERMQTENKISPYYRTKLRGLYTTAKADAEAECNILRKALDKIAEIKSLLEERRIAAKIAGIYSDAEPPRKTMRRGVLMTLLQQSAMTLPLWIGKPGDKPPPLCGAMPAAGDYVAKPGDKVAARVKAVDGDEQWILAEVVSYSHAANKYEVDDIDEEGKERHTLSRRRVIPLPQWKANPETDPEALFQREQLVLALYPQTTCFYRALIHAPPQRPQDDYSVLFEDTSYADGYSPPLNVAQRYVVACKETKKK.

Residues 12–88 (ELLAELQRLL…KALDKIAEIK (77 aa)) adopt a coiled-coil conformation. Residues 152–293 (GDYVAKPGDK…VVACKETKKK (142 aa)) enclose the SGF29 C-terminal domain. Histone H3K4me3 N-terminus binding stretches follow at residues 194-196 (DID) and 240-243 (QTTC). The tract at residues 264–266 (FED) is histone H3K4me3 binding.

This sequence belongs to the SGF29 family. In terms of assembly, interacts with dimethylated and trimethylated 'Lys-4' of histone H3 (H3K4me2 and H3K4me3), with a preference for the trimethylated form (H3K4me3). Component of some SAGA-type complexes. Component of the ADA2A-containing complex (ATAC).

The protein localises to the nucleus. Functionally, chromatin reader component of some histone acetyltransferase (HAT) SAGA-type complexes like the TFTC-HAT, ATAC or STAGA complexes. SGF29 specifically recognizes and binds methylated 'Lys-4' of histone H3 (H3K4me), with a preference for trimethylated form (H3K4me3). In the SAGA-type complexes, SGF29 is required to recruit complexes to H3K4me. Also binds non-histone proteins that are methylated on Lys residues. This Gallus gallus (Chicken) protein is SAGA-associated factor 29.